The sequence spans 608 residues: RAS guanyl-releasing protein 2 (608 aa).

Residues 4–126 enclose the N-terminal Ras-GEF domain; it reads TLDLDKGCTV…SLIDIESVPT (123 aa). Ser-116, Ser-117, and Ser-147 each carry phosphoserine. One can recognise a Ras-GEF domain in the interval 154 to 387; the sequence is EPMELAEHLT…YQLSLQREPR (234 aa). Positions 382–405 are disordered; it reads LQREPRSKSSPTSPTSCTPPPRPP. EF-hand domains are found at residues 426–461 and 463–490; these read HIEK…FPYL and AFGD…SSSV. 10 residues coordinate Ca(2+): Asp-439, Asp-441, Asp-443, His-445, Glu-450, Asp-468, Asn-470, Asp-472, Cys-474, and Glu-479. The segment at 498–548 adopts a Phorbol-ester/DAG-type zinc-finger fold; sequence VHNFQESNSLRPVACRHCKALILGIYKQGLKCRACGVNCHKQCKERLSVEC. A phosphoserine mark is found at Ser-554 and Ser-575. The tract at residues 555–596 is disordered; the sequence is VSLEGSAPSPSPTHTHHRAFSFSLPRPGRRSSRPPEIREEEV.

This sequence belongs to the RASGRP family. Forms a signaling complex with RAP1 and BRAF. Interacts with F-actin. Interacts with RAP1. As to expression, detected in megakaryocytes, platelet and neutrophils but not in lymphocytes (at protein level). Isoform 1 and isoform 3 are detected in brain basal glanglia, heart, lung, spleen, liver and kidney interstitial cells.

It is found in the cytoplasm. The protein resides in the cytosol. It localises to the cell membrane. Its subcellular location is the synapse. The protein localises to the synaptosome. It is found in the cell projection. The protein resides in the ruffle membrane. Its function is as follows. Functions as a calcium- and DAG-regulated nucleotide exchange factor specifically activating Rap through the exchange of bound GDP for GTP. May also activate other GTPases such as RRAS, RRAS2, NRAS, KRAS but not HRAS. Functions in aggregation of platelets and adhesion of T-lymphocytes and neutrophils probably through inside-out integrin activation. May function in the muscarinic acetylcholine receptor M1/CHRM1 signaling pathway. The chain is RAS guanyl-releasing protein 2 (Rasgrp2) from Mus musculus (Mouse).